A 568-amino-acid chain; its full sequence is Probable pectinesterase/pectinesterase inhibitor 23 (568 aa).

The first 33 residues, 1–33 (MGSDGDKKKKFIVAGSVSGFLVIMVVSVAVVTS), serve as a signal peptide directing secretion. A pectinesterase inhibitor 23 region spans residues 45–198 (RKTTKAVQAV…RELSSNSLAM (154 aa)). N94, N210, and N316 each carry an N-linked (GlcNAc...) asparagine glycan. The tract at residues 251–548 (PGPVKANAVV…PQDALLYTGD (298 aa)) is pectinesterase 23. T333 and Q363 together coordinate substrate. The Proton donor; for pectinesterase activity role is filled by D386. C400 and C420 are oxidised to a cystine. The active-site Nucleophile; for pectinesterase activity is D407. Residues R475 and W477 each contribute to the substrate site.

It in the N-terminal section; belongs to the PMEI family. This sequence in the C-terminal section; belongs to the pectinesterase family. As to expression, expressed in mature pollen grains in the anthers and on the stigma. Found in pollen tubes within the style.

The protein localises to the secreted. The protein resides in the cell wall. It catalyses the reaction [(1-&gt;4)-alpha-D-galacturonosyl methyl ester](n) + n H2O = [(1-&gt;4)-alpha-D-galacturonosyl](n) + n methanol + n H(+). Its pathway is glycan metabolism; pectin degradation; 2-dehydro-3-deoxy-D-gluconate from pectin: step 1/5. Acts in the modification of cell walls via demethylesterification of cell wall pectin. This Arabidopsis thaliana (Mouse-ear cress) protein is Probable pectinesterase/pectinesterase inhibitor 23 (PME23).